Consider the following 97-residue polypeptide: Sperm-associated acrosin inhibitor (97 aa).

The N-terminal stretch at 1 to 26 (MAFFSSRVRALFILVLVLPLCSETGF) is a signal peptide. The region spanning 32 to 90 (TRKEPDCDVYRSHLFFCTREMDPICGTNGKSYANPCIFCSEKLGRNEKFDFGHWGHCRE) is the Kazal-like domain. Disulfide bonds link C38–C70, C48–C67, and C56–C88.

As to expression, seminal plasma.

Its subcellular location is the secreted. In terms of biological role, inhibits acrosin. The chain is Sperm-associated acrosin inhibitor from Sus scrofa (Pig).